We begin with the raw amino-acid sequence, 327 residues long: Undecaprenyl-phosphate 4-deoxy-4-formamido-L-arabinose transferase (327 aa).

At 1–235 (MFDAAPIKKV…TCLTTTPLRL (235 aa)) the chain is on the cytoplasmic side. A helical transmembrane segment spans residues 236–256 (LSLLGSVIAIGGFSLSVLLIV). The Periplasmic segment spans residues 257–269 (LRLALGPQWAAEG). A helical transmembrane segment spans residues 270 to 290 (VFMLFAVLFTFIGAQFIGMGL). Topologically, residues 291–327 (LGEYIGRIYNDVRARPRYFVQQVIYPESTPFTEESHQ) are cytoplasmic.

Belongs to the glycosyltransferase 2 family.

It localises to the cell inner membrane. It catalyses the reaction UDP-4-deoxy-4-formamido-beta-L-arabinose + di-trans,octa-cis-undecaprenyl phosphate = 4-deoxy-4-formamido-alpha-L-arabinopyranosyl di-trans,octa-cis-undecaprenyl phosphate + UDP. It functions in the pathway glycolipid biosynthesis; 4-amino-4-deoxy-alpha-L-arabinose undecaprenyl phosphate biosynthesis; 4-amino-4-deoxy-alpha-L-arabinose undecaprenyl phosphate from UDP-4-deoxy-4-formamido-beta-L-arabinose and undecaprenyl phosphate: step 1/2. It participates in bacterial outer membrane biogenesis; lipopolysaccharide biosynthesis. Its function is as follows. Catalyzes the transfer of 4-deoxy-4-formamido-L-arabinose from UDP to undecaprenyl phosphate. The modified arabinose is attached to lipid A and is required for resistance to polymyxin and cationic antimicrobial peptides. In Salmonella choleraesuis (strain SC-B67), this protein is Undecaprenyl-phosphate 4-deoxy-4-formamido-L-arabinose transferase.